The sequence spans 767 residues: V-set and immunoglobulin domain-containing protein 10-like 2 (767 aa).

The first 28 residues, 1 to 28 (MVGQRAQHSPVSLLLLIHLCLLHLRASG), serve as a signal peptide directing secretion. 3 Ig-like domains span residues 34–140 (PEAP…SHLT), 150–234 (PQVR…AFLD), and 242–324 (PVIT…TTVQ). Disulfide bonds link Cys-56–Cys-122, Cys-169–Cys-217, and Cys-268–Cys-308. Residue Asn-376 is glycosylated (N-linked (GlcNAc...) asparagine). 2 Ig-like domains span residues 399 to 499 (PALA…LQLE) and 501 to 593 (PQLD…VLLE). 2 disulfide bridges follow: Cys-435–Cys-481 and Cys-522–Cys-577. The region spanning 599–699 (APPNVTISRL…EVKIPADPPF (101 aa)) is the Fibronectin type-III domain. Asn-602 and Asn-628 each carry an N-linked (GlcNAc...) asparagine glycan. A helical membrane pass occupies residues 704–724 (AVLGAAGTGMVVATVASLLVF). The tract at residues 735-754 (PRLETPTTTPGLDPAQETTD) is disordered. Polar residues predominate over residues 739 to 754 (TPTTTPGLDPAQETTD).

Its subcellular location is the membrane. The sequence is that of V-set and immunoglobulin domain-containing protein 10-like 2 from Homo sapiens (Human).